A 1435-amino-acid polypeptide reads, in one-letter code: Gag-Pol polyprotein (1435 aa).

Glycine 2 is lipidated: N-myristoyl glycine; by host. The interaction with Gp41 stretch occupies residues 7-31; that stretch reads VLSGGELDKWEKIRLRPGGKKQYKL. An interaction with host CALM1 region spans residues 8–43; that stretch reads LSGGELDKWEKIRLRPGGKKQYKLKHIVWASRELER. Positions 12–19 are interaction with host AP3D1; it reads ELDKWEKI. Residues 14 to 33 are interaction with membrane phosphatidylinositol 4,5-bisphosphate and RNA; sequence DKWEKIRLRPGGKKQYKLKH. The short motif at 16-22 is the Nuclear export signal element; it reads WEKIRLR. The Nuclear localization signal signature appears at 26-32; it reads KKQYKLK. Positions 73–77 are interaction with membrane phosphatidylinositol 4,5-bisphosphate; the sequence is EELRS. A disordered region spans residues 106-128; the sequence is EEQNKSKKKAQQAAADTGNNSQV. Phosphotyrosine; by host is present on tyrosine 132. Phosphoserine; by host MAPK1 is present on serine 148. The tract at residues 189 to 227 is interaction with human PPIA/CYPA and NUP153; that stretch reads NTVGGHQAAMQMLKETINEEAAEWDRLHPVHAGPIAPGQ. The segment at 277–363 is dimerization/Multimerization of capsid protein p24; the sequence is YSPTSILDIR…GGPGHKARVL (87 aa). 2 consecutive CCHC-type zinc fingers follow at residues 390–407 and 411–428; these read VKCF…NCRA and KGCW…DCTE. Positions 444–464 are disordered; the sequence is KAREFSSEQTRANSPTRRELQ. The tract at residues 489 to 493 is dimerization of protease; the sequence is PQITL. Residues 508-577 form the Peptidase A2 domain; sequence KEALLDTGAD…TPVNIIGRNL (70 aa). Aspartate 513 acts as the For protease activity; shared with dimeric partner in catalysis. Dimerization of protease regions lie at residues 537–543 and 576–588; these read GIGGFIK and NLLT…LNFP. Positions 631 to 821 constitute a Reverse transcriptase domain; that stretch reads EGKISKIGPE…PPFLWMGYEL (191 aa). Mg(2+)-binding residues include aspartate 697, aspartate 772, and aspartate 773. An RT 'primer grip' region spans residues 814 to 822; that stretch reads FLWMGYELH. The short motif at 985-1001 is the Tryptophan repeat motif element; sequence WEAWWTEYWQATWIPEW. One can recognise an RNase H type-1 domain in the interval 1021–1144; that stretch reads IIGAETFYVD…VDGLVSAGIR (124 aa). Positions 1030, 1065, 1085, and 1136 each coordinate Mg(2+). An Integrase-type zinc finger spans residues 1150–1191; it reads DGIDKAQEEHEKYHSNWRAMASDFNLPPVVAKEIVASCDKCQ. Zn(2+) is bound by residues histidine 1159, histidine 1163, cysteine 1187, and cysteine 1190. The Integrase catalytic domain occupies 1201 to 1351; the sequence is VDCSPGIWQL…SAGERIVDII (151 aa). The Mg(2+) site is built by aspartate 1211, aspartate 1263, and glutamate 1299. Residues 1370-1417 constitute a DNA-binding region (integrase-type); it reads FRVYYRDSRDPVWKGPAKLLWKGEGAVVIQDNSDIKVVPRRKAKIIRD.

Homotrimer; further assembles as hexamers of trimers. Matrix protein p17: Interacts with gp41 (via C-terminus). Interacts with host CALM1; this interaction induces a conformational change in the Matrix protein, triggering exposure of the myristate group. Interacts with host AP3D1; this interaction allows the polyprotein trafficking to multivesicular bodies during virus assembly. Part of the pre-integration complex (PIC) which is composed of viral genome, matrix protein, Vpr and integrase. As to quaternary structure, homodimer; the homodimer further multimerizes as homohexamers or homopentamers. Interacts with human PPIA/CYPA; This interaction stabilizes the capsid. Interacts with human NUP153. Interacts with host PDZD8; this interaction stabilizes the capsid. Interacts with monkey TRIM5; this interaction destabilizes the capsid. In terms of assembly, homodimer, whose active site consists of two apposed aspartic acid residues. Heterodimer of p66 RT and p51 RT (RT p66/p51). Heterodimerization of RT is essential for DNA polymerase activity. The overall folding of the subdomains is similar in p66 RT and p51 RT but the spatial arrangements of the subdomains are dramatically different. As to quaternary structure, homotetramer; may further associate as a homohexadecamer. Part of the pre-integration complex (PIC) which is composed of viral genome, matrix protein, Vpr and integrase. Interacts with human SMARCB1/INI1 and human PSIP1/LEDGF isoform 1. Interacts with human KPNA3; this interaction might play a role in nuclear import of the pre-integration complex. Interacts with human NUP153; this interaction might play a role in nuclear import of the pre-integration complex. Mg(2+) serves as cofactor. In terms of processing, specific enzymatic cleavages by the viral protease yield mature proteins. The protease is released by autocatalytic cleavage. The polyprotein is cleaved during and after budding, this process is termed maturation. Proteolytic cleavage of p66 RT removes the RNase H domain to yield the p51 RT subunit. Nucleocapsid protein p7 might be further cleaved after virus entry. Post-translationally, tyrosine phosphorylated presumably in the virion by a host kinase. Phosphorylation is apparently not a major regulator of membrane association. Phosphorylated possibly by host MAPK1; this phosphorylation is necessary for Pin1-mediated virion uncoating. In terms of processing, methylated by host PRMT6, impairing its function by reducing RNA annealing and the initiation of reverse transcription.

Its subcellular location is the host cell membrane. The protein localises to the host endosome. It is found in the host multivesicular body. The protein resides in the virion membrane. It localises to the host nucleus. Its subcellular location is the host cytoplasm. The protein localises to the virion. It catalyses the reaction Specific for a P1 residue that is hydrophobic, and P1' variable, but often Pro.. It carries out the reaction Endohydrolysis of RNA in RNA/DNA hybrids. Three different cleavage modes: 1. sequence-specific internal cleavage of RNA. Human immunodeficiency virus type 1 and Moloney murine leukemia virus enzymes prefer to cleave the RNA strand one nucleotide away from the RNA-DNA junction. 2. RNA 5'-end directed cleavage 13-19 nucleotides from the RNA end. 3. DNA 3'-end directed cleavage 15-20 nucleotides away from the primer terminus.. The catalysed reaction is 3'-end directed exonucleolytic cleavage of viral RNA-DNA hybrid.. The enzyme catalyses DNA(n) + a 2'-deoxyribonucleoside 5'-triphosphate = DNA(n+1) + diphosphate. With respect to regulation, protease: The viral protease is inhibited by many synthetic protease inhibitors (PIs), such as amprenavir, atazanavir, indinavir, loprinavir, nelfinavir, ritonavir and saquinavir. Use of protease inhibitors in tritherapy regimens permit more ambitious therapeutic strategies. Reverse transcriptase/ribonuclease H: RT can be inhibited either by nucleoside RT inhibitors (NRTIs) or by non nucleoside RT inhibitors (NNRTIs). NRTIs act as chain terminators, whereas NNRTIs inhibit DNA polymerization by binding a small hydrophobic pocket near the RT active site and inducing an allosteric change in this region. Classical NRTIs are abacavir, adefovir (PMEA), didanosine (ddI), lamivudine (3TC), stavudine (d4T), tenofovir (PMPA), zalcitabine (ddC), and zidovudine (AZT). Classical NNRTIs are atevirdine (BHAP U-87201E), delavirdine, efavirenz (DMP-266), emivirine (I-EBU), and nevirapine (BI-RG-587). The tritherapies used as a basic effective treatment of AIDS associate two NRTIs and one NNRTI. In terms of biological role, mediates, with Gag polyprotein, the essential events in virion assembly, including binding the plasma membrane, making the protein-protein interactions necessary to create spherical particles, recruiting the viral Env proteins, and packaging the genomic RNA via direct interactions with the RNA packaging sequence (Psi). Gag-Pol polyprotein may regulate its own translation, by the binding genomic RNA in the 5'-UTR. At low concentration, the polyprotein would promote translation, whereas at high concentration, the polyprotein would encapsidate genomic RNA and then shut off translation. Targets the polyprotein to the plasma membrane via a multipartite membrane-binding signal, that includes its myristoylated N-terminus. Matrix protein is part of the pre-integration complex. Implicated in the release from host cell mediated by Vpu. Binds to RNA. Functionally, forms the conical core that encapsulates the genomic RNA-nucleocapsid complex in the virion. Most core are conical, with only 7% tubular. The core is constituted by capsid protein hexamer subunits. The core is disassembled soon after virion entry. Host restriction factors such as TRIM5-alpha or TRIMCyp bind retroviral capsids and cause premature capsid disassembly, leading to blocks in reverse transcription. Capsid restriction by TRIM5 is one of the factors which restricts HIV-1 to the human species. Host PIN1 apparently facilitates the virion uncoating. On the other hand, interactions with PDZD8 or CYPA stabilize the capsid. Its function is as follows. Encapsulates and protects viral dimeric unspliced genomic RNA (gRNA). Binds these RNAs through its zinc fingers. Acts as a nucleic acid chaperone which is involved in rearangement of nucleic acid secondary structure during gRNA retrotranscription. Also facilitates template switch leading to recombination. As part of the polyprotein, participates in gRNA dimerization, packaging, tRNA incorporation and virion assembly. In terms of biological role, aspartyl protease that mediates proteolytic cleavages of Gag and Gag-Pol polyproteins during or shortly after the release of the virion from the plasma membrane. Cleavages take place as an ordered, step-wise cascade to yield mature proteins. This process is called maturation. Displays maximal activity during the budding process just prior to particle release from the cell. Also cleaves Nef and Vif, probably concomitantly with viral structural proteins on maturation of virus particles. Hydrolyzes host EIF4GI and PABP1 in order to shut off the capped cellular mRNA translation. The resulting inhibition of cellular protein synthesis serves to ensure maximal viral gene expression and to evade host immune response. Also mediates cleavage of host YTHDF3. Mediates cleavage of host CARD8, thereby activating the CARD8 inflammasome, leading to the clearance of latent HIV-1 in patient CD4(+) T-cells after viral reactivation; in contrast, HIV-1 can evade CARD8-sensing when its protease remains inactive in infected cells prior to viral budding. Multifunctional enzyme that converts the viral RNA genome into dsDNA in the cytoplasm, shortly after virus entry into the cell. This enzyme displays a DNA polymerase activity that can copy either DNA or RNA templates, and a ribonuclease H (RNase H) activity that cleaves the RNA strand of RNA-DNA heteroduplexes in a partially processive 3' to 5' endonucleasic mode. Conversion of viral genomic RNA into dsDNA requires many steps. A tRNA(3)-Lys binds to the primer-binding site (PBS) situated at the 5'-end of the viral RNA. RT uses the 3' end of the tRNA primer to perform a short round of RNA-dependent minus-strand DNA synthesis. The reading proceeds through the U5 region and ends after the repeated (R) region which is present at both ends of viral RNA. The portion of the RNA-DNA heteroduplex is digested by the RNase H, resulting in a ssDNA product attached to the tRNA primer. This ssDNA/tRNA hybridizes with the identical R region situated at the 3' end of viral RNA. This template exchange, known as minus-strand DNA strong stop transfer, can be either intra- or intermolecular. RT uses the 3' end of this newly synthesized short ssDNA to perform the RNA-dependent minus-strand DNA synthesis of the whole template. RNase H digests the RNA template except for two polypurine tracts (PPTs) situated at the 5'-end and near the center of the genome. It is not clear if both polymerase and RNase H activities are simultaneous. RNase H probably can proceed both in a polymerase-dependent (RNA cut into small fragments by the same RT performing DNA synthesis) and a polymerase-independent mode (cleavage of remaining RNA fragments by free RTs). Secondly, RT performs DNA-directed plus-strand DNA synthesis using the PPTs that have not been removed by RNase H as primers. PPTs and tRNA primers are then removed by RNase H. The 3' and 5' ssDNA PBS regions hybridize to form a circular dsDNA intermediate. Strand displacement synthesis by RT to the PBS and PPT ends produces a blunt ended, linear dsDNA copy of the viral genome that includes long terminal repeats (LTRs) at both ends. Functionally, catalyzes viral DNA integration into the host chromosome, by performing a series of DNA cutting and joining reactions. This enzyme activity takes place after virion entry into a cell and reverse transcription of the RNA genome in dsDNA. The first step in the integration process is 3' processing. This step requires a complex comprising the viral genome, matrix protein, Vpr and integrase. This complex is called the pre-integration complex (PIC). The integrase protein removes 2 nucleotides from each 3' end of the viral DNA, leaving recessed CA OH's at the 3' ends. In the second step, the PIC enters cell nucleus. This process is mediated through integrase and Vpr proteins, and allows the virus to infect a non dividing cell. This ability to enter the nucleus is specific of lentiviruses, other retroviruses cannot and rely on cell division to access cell chromosomes. In the third step, termed strand transfer, the integrase protein joins the previously processed 3' ends to the 5' ends of strands of target cellular DNA at the site of integration. The 5'-ends are produced by integrase-catalyzed staggered cuts, 5 bp apart. A Y-shaped, gapped, recombination intermediate results, with the 5'-ends of the viral DNA strands and the 3' ends of target DNA strands remaining unjoined, flanking a gap of 5 bp. The last step is viral DNA integration into host chromosome. This involves host DNA repair synthesis in which the 5 bp gaps between the unjoined strands are filled in and then ligated. Since this process occurs at both cuts flanking the HIV genome, a 5 bp duplication of host DNA is produced at the ends of HIV-1 integration. Alternatively, Integrase may catalyze the excision of viral DNA just after strand transfer, this is termed disintegration. This Human immunodeficiency virus type 1 group M subtype B (isolate NY5) (HIV-1) protein is Gag-Pol polyprotein (gag-pol).